The following is a 163-amino-acid chain: Endoribonuclease YbeY (163 aa).

Positions 116, 120, and 126 each coordinate Zn(2+).

It belongs to the endoribonuclease YbeY family. Zn(2+) serves as cofactor.

It localises to the cytoplasm. In terms of biological role, single strand-specific metallo-endoribonuclease involved in late-stage 70S ribosome quality control and in maturation of the 3' terminus of the 16S rRNA. This chain is Endoribonuclease YbeY, found in Idiomarina loihiensis (strain ATCC BAA-735 / DSM 15497 / L2-TR).